The primary structure comprises 285 residues: Methyl-CpG-binding domain protein 3 (285 aa).

One can recognise an MBD domain in the interval 1 to 69; sequence MERKRWECPA…STFDFRTGKM (69 aa). Ser-56 bears the Phosphoserine mark. Lys-73 is covalently cross-linked (Glycyl lysine isopeptide (Lys-Gly) (interchain with G-Cter in SUMO2)). Ser-85 carries the phosphoserine modification. Glycyl lysine isopeptide (Lys-Gly) (interchain with G-Cter in SUMO2) cross-links involve residues Lys-90 and Lys-92. Ser-144 carries the post-translational modification Phosphoserine. A coiled-coil region spans residues 221–279; it reads TDDDIRKQEELVQQVRKRLEEALMADMLAHVEELARDGEAPLDKACAEEEEEEEEEEEE. A compositionally biased stretch (basic and acidic residues) spans 255–267; it reads ARDGEAPLDKACA. Positions 255–285 are disordered; that stretch reads ARDGEAPLDKACAEEEEEEEEEEEEPEPERV. Residues 268–285 are compositionally biased toward acidic residues; the sequence is EEEEEEEEEEEEPEPERV.

As to quaternary structure, heterodimer (via N-terminus) with MBD2. Component of the MeCP1 histone deacetylase complex. Component of the nucleosome remodeling and deacetylase (NuRD) repressor complex, composed of core proteins MTA1, MTA2, MTA3, RBBP4, RBBP7, HDAC1, HDAC2, MBD2, MBD3, and peripherally associated proteins CDK2AP1, CDK2AP2, GATAD2A, GATAD2B, CHD3, CHD4 and CHD5. The exact stoichiometry of the NuRD complex is unknown, and some subunits such as MBD2 and MBD3, GATAD2A and GATAD2B, and CHD3, CHD4 and CHD5 define mutually exclusive NuRD complexes. Interacts with MBD3L2 (via N-terminus); the interaction is direct. Interacts with BCL6. Interacts with CDK2AP1. Interacts with HDAC1. Interacts with MTA2. Interacts with DNMT1. Interacts with GATAD2A. Interacts with GATAD2B. Does not interact with PWWP2A. Does not interact with PWWP2B. Highly expressed in brain, heart, kidney, liver, lung, skeletal muscle, spleen and testis. Detected at lower levels in embryonic stem cells.

It localises to the nucleus. The protein resides in the chromosome. In terms of biological role, acts as a component of the histone deacetylase NuRD complex which participates in the remodeling of chromatin. Acts as transcriptional repressor and plays a role in gene silencing. Does not bind methylated DNA by itself. Binds to a lesser degree DNA containing unmethylated CpG dinucleotides. Recruits histone deacetylases and DNA methyltransferases. The sequence is that of Methyl-CpG-binding domain protein 3 (Mbd3) from Mus musculus (Mouse).